We begin with the raw amino-acid sequence, 175 residues long: Pathogenesis-related protein 1A1 (175 aa).

Positions 1 to 21 (MKSSIFVACFITFIIFHSSQA) are cleaved as a signal peptide. Residues 29-146 (LNAHNAARRR…SGWVFITCNY (118 aa)) form the SCP domain. 3 disulfide bridges follow: cysteine 65-cysteine 135, cysteine 108-cysteine 114, and cysteine 130-cysteine 144.

This sequence belongs to the CRISP family.

Its function is as follows. Probably involved in the defense reaction of plants against pathogens. This chain is Pathogenesis-related protein 1A1, found in Solanum lycopersicum (Tomato).